Here is a 341-residue protein sequence, read N- to C-terminus: Tetraacyldisaccharide 4'-kinase (341 aa).

54–61 (TVGGAGKT) serves as a coordination point for ATP.

Belongs to the LpxK family.

The enzyme catalyses a lipid A disaccharide + ATP = a lipid IVA + ADP + H(+). It participates in glycolipid biosynthesis; lipid IV(A) biosynthesis; lipid IV(A) from (3R)-3-hydroxytetradecanoyl-[acyl-carrier-protein] and UDP-N-acetyl-alpha-D-glucosamine: step 6/6. In terms of biological role, transfers the gamma-phosphate of ATP to the 4'-position of a tetraacyldisaccharide 1-phosphate intermediate (termed DS-1-P) to form tetraacyldisaccharide 1,4'-bis-phosphate (lipid IVA). This Brucella anthropi (strain ATCC 49188 / DSM 6882 / CCUG 24695 / JCM 21032 / LMG 3331 / NBRC 15819 / NCTC 12168 / Alc 37) (Ochrobactrum anthropi) protein is Tetraacyldisaccharide 4'-kinase.